The sequence spans 193 residues: Large ribosomal subunit protein uL18 (193 aa).

The protein belongs to the universal ribosomal protein uL18 family. Part of the 50S ribosomal subunit. Contacts the 5S and 23S rRNAs.

Its function is as follows. This is one of the proteins that bind and probably mediate the attachment of the 5S RNA into the large ribosomal subunit, where it forms part of the central protuberance. The protein is Large ribosomal subunit protein uL18 of Methanococcus vannielii (strain ATCC 35089 / DSM 1224 / JCM 13029 / OCM 148 / SB).